The chain runs to 386 residues: Transcription factor GTE1 (386 aa).

Disordered regions lie at residues 66 to 106 and 340 to 386; these read GAAQ…KHVS and ANKS…AKKA. Over residues 68-78 the composition is skewed to polar residues; that stretch reads AQTNTSKSNSG. In terms of domain architecture, Bromo spans 105-211; sequence VSSPDLMRQF…EKFEEKWLLI (107 aa). Residues 263 to 344 form the NET domain; it reads RESVVQRCRK…EALKAANKSS (82 aa). Residues 345 to 358 show a composition bias toward low complexity; that stretch reads GGTNAQNNNNTGTG.

As to expression, barely detectable in stems, leaves, siliques, and dry seeds, but was present at considerable levels in roots, flowers and imbibited seeds.

It is found in the nucleus. Transcription activator that plays a role in the promotion of seed germination by both negatively and positively regulating the abscisic acid (ABA) and phytochrome A (phyA) transduction pathways, respectively. This is Transcription factor GTE1 (GTE1) from Arabidopsis thaliana (Mouse-ear cress).